We begin with the raw amino-acid sequence, 154 residues long: Ecotin-like protein 2 (154 aa).

Belongs to the protease inhibitor I11 (ecotin) family.

This chain is Ecotin-like protein 2, found in Trypanosoma brucei brucei (strain 927/4 GUTat10.1).